Here is a 600-residue protein sequence, read N- to C-terminus: Glutamine--fructose-6-phosphate aminotransferase [isomerizing] (600 aa).

C2 serves as the catalytic Nucleophile; for GATase activity. Residues 2-217 form the Glutamine amidotransferase type-2 domain; it reads CGIVGFIGEQ…DKEIVIVTKE (216 aa). SIS domains follow at residues 283-422 and 452-590; these read IRNA…AKGE and LAKQ…VDKP. The For Fru-6P isomerization activity role is filled by K595.

In terms of assembly, homodimer.

It is found in the cytoplasm. It carries out the reaction D-fructose 6-phosphate + L-glutamine = D-glucosamine 6-phosphate + L-glutamate. Its function is as follows. Catalyzes the first step in hexosamine metabolism, converting fructose-6P into glucosamine-6P using glutamine as a nitrogen source. This Bacillus cereus (strain ATCC 14579 / DSM 31 / CCUG 7414 / JCM 2152 / NBRC 15305 / NCIMB 9373 / NCTC 2599 / NRRL B-3711) protein is Glutamine--fructose-6-phosphate aminotransferase [isomerizing].